Consider the following 69-residue polypeptide: UPF0248 protein AF_0420 (69 aa).

Belongs to the UPF0248 family.

The sequence is that of UPF0248 protein AF_0420 from Archaeoglobus fulgidus (strain ATCC 49558 / DSM 4304 / JCM 9628 / NBRC 100126 / VC-16).